We begin with the raw amino-acid sequence, 645 residues long: Protein FAM47B (645 aa).

Basic and acidic residues-rich tracts occupy residues 1–11, 238–251, and 288–299; these read MGDRRPQDRPR, EPPE…RVDP, and PETRVSHLHPEP. Disordered stretches follow at residues 1-23 and 168-321; these read MGDR…WYCD and AREK…SLCP.

Belongs to the FAM47 family.

The protein is Protein FAM47B (FAM47B) of Homo sapiens (Human).